The sequence spans 477 residues: Glycogen synthase (477 aa).

Lysine 15 contacts ADP-alpha-D-glucose.

The protein belongs to the glycosyltransferase 1 family. Bacterial/plant glycogen synthase subfamily.

The enzyme catalyses [(1-&gt;4)-alpha-D-glucosyl](n) + ADP-alpha-D-glucose = [(1-&gt;4)-alpha-D-glucosyl](n+1) + ADP + H(+). Its pathway is glycan biosynthesis; glycogen biosynthesis. In terms of biological role, synthesizes alpha-1,4-glucan chains using ADP-glucose. The sequence is that of Glycogen synthase from Shigella dysenteriae serotype 1 (strain Sd197).